We begin with the raw amino-acid sequence, 302 residues long: uncharacterized protein (302 aa).

Helical transmembrane passes span 13-32, 42-64, 77-96, 106-125, 132-150, 154-171, 183-202, 217-239, 246-265, and 275-297; these read GILLAISAYTMWGIAPIYFK, ILSHRVVWSFVLLAVLIHLGRRW, FWLLLVTALLVGGNWLIFIW, ASLGYYINPLLNVLLGMLFL, LQWFAVALAAIGVGIQLVV, VPIVAIALATSFGFYGLL, LFLETLFMLPAAAIYLIWLA, NLLLVCAGVVTTLPLLCFTGAAA, LGFFQYIGPSLMFLLAVLVY, and ITFAFIWSALVIFSVDGLKAGHA. The EamA domain occupies 22-149; it reads TMWGIAPIYF…AAIGVGIQLV (128 aa).

The protein belongs to the EamA transporter family.

Its subcellular location is the cell membrane. This is an uncharacterized protein from Vibrio cholerae serotype O1 (strain ATCC 39315 / El Tor Inaba N16961).